The following is a 953-amino-acid chain: Coatomer subunit beta (953 aa).

Residue Thr2 is modified to N-acetylthreonine. 6 HEAT repeats span residues 96 to 131 (HEMILVCDAYRKDLQHPNEFIRGSTLRFLCKLKEAE), 132 to 168 (LLEPLMPAIRACLEHRHSYVRRNAVLAIYTIYRNFEH), 240 to 276 (SERARFIRCIYNLLQSSSPAVKYEAAGTLVTLSSAPT), 277 to 314 (AIKAAAQCYIDLIIKESDNNVKLIVLDRLIELKEHPAH), 316 to 353 (RVLQDLVMDILRVLSTPDLEVRKKTLQLALDLVSSRNV), and 396 to 433 (DMAANVIPVLMEFLSDNNEAAAADVLEFVREAIQRFDN). N6-acetyllysine is present on Lys494.

Oligomeric complex that consists of at least the alpha, beta, beta', gamma, delta, epsilon and zeta subunits. Interacts with SCYL1. Interacts with COPG1. Interacts (via trunk domain) with ARF1 (via switch I region); the interaction is direct. Interacts with KCNK2/TREK (via N-terminus); this interaction increases the channel-mediated whole cell currents and promotes plasma membrane expression of KCNK2/TREK. Interacts with anthrax lethal factor (LF); this interaction may facilitate endosomal vesicle membrane translocation of LF and its release from the lumen of endosomal vesicles to external milieu. Interacts with CAPN8 and PRKCE. Interacts with ARF1 (myristoylated); this interaction is required for binding of COPB1 to Golgi membranes. Interacts with STX17. Interacts with TMEM115. Interacts with HLA-G-B2M complex; this interaction mediates the endoplasmic reticulum (ER) retrieval of HLA-E-B2M complexes that bind low affinity peptides. Interacts with TMEM41B. In terms of assembly, (Microbial infection) Interacts (via C-terminus) with HIV-1 Nef; the interaction is direct. In terms of processing, proteolytically cleaved between Ser-528 and Ser-529 by CAPN8.

The protein resides in the cytoplasm. Its subcellular location is the golgi apparatus membrane. It is found in the cytoplasmic vesicle. It localises to the COPI-coated vesicle membrane. The protein localises to the cell membrane. The protein resides in the endoplasmic reticulum-Golgi intermediate compartment. The coatomer is a cytosolic protein complex that binds to dilysine motifs and reversibly associates with Golgi non-clathrin-coated vesicles, which further mediate biosynthetic protein transport from the ER, via the Golgi up to the trans Golgi network. Coatomer complex is required for budding from Golgi membranes, and is essential for the retrograde Golgi-to-ER transport of dilysine-tagged proteins. In mammals, the coatomer can only be recruited by membranes associated to ADP-ribosylation factors (ARFs), which are small GTP-binding proteins; the complex also influences the Golgi structural integrity, as well as the processing, activity, and endocytic recycling of LDL receptors. Plays a functional role in facilitating the transport of kappa-type opioid receptor mRNAs into axons and enhances translation of these proteins. Required for limiting lipid storage in lipid droplets. Involved in lipid homeostasis by regulating the presence of perilipin family members PLIN2 and PLIN3 at the lipid droplet surface and promoting the association of adipocyte surface triglyceride lipase (PNPLA2) with the lipid droplet to mediate lipolysis. Involved in the Golgi disassembly and reassembly processes during cell cycle. Involved in autophagy by playing a role in early endosome function. Plays a role in organellar compartmentalization of secretory compartments including endoplasmic reticulum (ER)-Golgi intermediate compartment (ERGIC), Golgi, trans-Golgi network (TGN) and recycling endosomes, and in biosynthetic transport of CAV1. Promotes degradation of Nef cellular targets CD4 and MHC class I antigens by facilitating their trafficking to degradative compartments. The protein is Coatomer subunit beta of Homo sapiens (Human).